The primary structure comprises 177 residues: Adenine phosphoribosyltransferase (177 aa).

Belongs to the purine/pyrimidine phosphoribosyltransferase family. As to quaternary structure, homodimer.

Its subcellular location is the cytoplasm. It carries out the reaction AMP + diphosphate = 5-phospho-alpha-D-ribose 1-diphosphate + adenine. It participates in purine metabolism; AMP biosynthesis via salvage pathway; AMP from adenine: step 1/1. In terms of biological role, catalyzes a salvage reaction resulting in the formation of AMP, that is energically less costly than de novo synthesis. The polypeptide is Adenine phosphoribosyltransferase (Pelodictyon phaeoclathratiforme (strain DSM 5477 / BU-1)).